The primary structure comprises 189 residues: Large ribosomal subunit protein uL5c (189 aa).

This sequence belongs to the universal ribosomal protein uL5 family. As to quaternary structure, part of the 50S ribosomal subunit; contacts the 5S rRNA.

The protein localises to the plastid. The protein resides in the chloroplast. Its function is as follows. Binds 5S rRNA, forms part of the central protuberance of the 50S subunit. This is Large ribosomal subunit protein uL5c (rpl5) from Chara vulgaris (Common stonewort).